The primary structure comprises 378 residues: Zinc transporter 7 (378 aa).

At 1-37 (MLPLSIKDDEYKPPKFNLFGKISGWFRSILSDKTSRN) the chain is on the cytoplasmic side. The chain crosses the membrane as a helical span at residues 38 to 58 (LFFFLCLNLSFAFVELLYGIW). Residues 59 to 67 (SNCLGLISD) are Lumenal-facing. Residues 68-88 (SFHMFFDSTAILAGLAASVIS) form a helical membrane-spanning segment. Over 89–102 (KWRDNDAFSYGYVR) the chain is Cytoplasmic. Residues 103–123 (AEVLAGFVNGLFLIFTAFFIF) form a helical membrane-spanning segment. Over 124–140 (SEGVERALAPPDVHHER) the chain is Lumenal. A helical transmembrane segment spans residues 141–161 (LLLVSILGFVVNLVGIFVFNH). A his-rich loop region spans residues 161 to 220 (HGGHGHSHGSGHGHSHSLFNGALDHSHGHEDHCHSHGAKHGGAHSHDHDHAHGHGHLHSH). The Cytoplasmic portion of the chain corresponds to 162–238 (GGHGHSHGSG…AGPSRQILQG (77 aa)). The interval 186–228 (SHGHEDHCHSHGAKHGGAHSHDHDHAHGHGHLHSHDGPSFKET) is disordered. Basic and acidic residues predominate over residues 204–224 (HSHDHDHAHGHGHLHSHDGPS). The chain crosses the membrane as a helical span at residues 239–259 (VFLHILADTLGSIGVIASAIM). Residues 260-264 (MQNFG) are Lumenal-facing. Residues 265–285 (LMIADPICSILIAILIVVSVI) traverse the membrane as a helical segment. Over 286-378 (PLLRESIGIL…LYVQIDFAAM (93 aa)) the chain is Cytoplasmic.

The protein belongs to the cation diffusion facilitator (CDF) transporter (TC 2.A.4) family. SLC30A subfamily. As to quaternary structure, homooligomer.

It localises to the golgi apparatus membrane. The protein localises to the cytoplasmic vesicle. Its subcellular location is the golgi apparatus. It is found in the trans-Golgi network. The protein resides in the sarcoplasmic reticulum. It localises to the mitochondrion. It catalyses the reaction Zn(2+)(in) = Zn(2+)(out). Zinc ion transporter mediating zinc entry from the cytosol into the lumen of organelles along the secretory pathway. By contributing to zinc ion homeostasis within the early secretory pathway, regulates the activation and folding of enzymes like alkaline phosphatases. The chain is Zinc transporter 7 from Rattus norvegicus (Rat).